Here is a 357-residue protein sequence, read N- to C-terminus: Peptide chain release factor 1 (357 aa).

Gln-234 carries the N5-methylglutamine modification. Residues 249 to 308 (PSGVEVSCQDEKSQHKNRSKAMRVLRSRVYEKKREEQQAEREEARRSMVGSGDRSAKIRT) form a disordered region. Basic residues predominate over residues 263 to 274 (HKNRSKAMRVLR). A compositionally biased stretch (basic and acidic residues) spans 276-294 (RVYEKKREEQQAEREEARR).

This sequence belongs to the prokaryotic/mitochondrial release factor family. Post-translationally, methylated by PrmC. Methylation increases the termination efficiency of RF1.

It is found in the cytoplasm. In terms of biological role, peptide chain release factor 1 directs the termination of translation in response to the peptide chain termination codons UAG and UAA. This chain is Peptide chain release factor 1, found in Salinibacter ruber (strain DSM 13855 / M31).